Reading from the N-terminus, the 257-residue chain is Imidazole glycerol phosphate synthase subunit HisF (257 aa).

Catalysis depends on residues Asp-12 and Asp-131.

The protein belongs to the HisA/HisF family. As to quaternary structure, heterodimer of HisH and HisF.

The protein localises to the cytoplasm. The enzyme catalyses 5-[(5-phospho-1-deoxy-D-ribulos-1-ylimino)methylamino]-1-(5-phospho-beta-D-ribosyl)imidazole-4-carboxamide + L-glutamine = D-erythro-1-(imidazol-4-yl)glycerol 3-phosphate + 5-amino-1-(5-phospho-beta-D-ribosyl)imidazole-4-carboxamide + L-glutamate + H(+). It functions in the pathway amino-acid biosynthesis; L-histidine biosynthesis; L-histidine from 5-phospho-alpha-D-ribose 1-diphosphate: step 5/9. Functionally, IGPS catalyzes the conversion of PRFAR and glutamine to IGP, AICAR and glutamate. The HisF subunit catalyzes the cyclization activity that produces IGP and AICAR from PRFAR using the ammonia provided by the HisH subunit. The protein is Imidazole glycerol phosphate synthase subunit HisF of Burkholderia orbicola (strain MC0-3).